We begin with the raw amino-acid sequence, 489 residues long: Tyrosine-protein phosphatase MSG5 (489 aa).

Residues 1 to 18 (MQFHSDKQHLDSKTDIDF) show a composition bias toward basic and acidic residues. The segment at 1 to 30 (MQFHSDKQHLDSKTDIDFKPNSPRSLQNRN) is disordered. Phosphoserine is present on residues serine 22, serine 98, and serine 151. The residue at position 178 (threonine 178) is a Phosphothreonine. The region spanning 233–375 (GPLLVLPPNL…LMEWGTMLSK (143 aa)) is the Tyrosine-protein phosphatase domain. Cysteine 319 serves as the catalytic Phosphocysteine intermediate. Disordered regions lie at residues 375–401 (KNSPGEEGETVHMPEEDDIGNNEVSST) and 419–489 (LSSS…MFLP). Over residues 419 to 450 (LSSSPNDSSVNSSEVTPRTPATLTGARTALAT) the composition is skewed to low complexity. The segment covering 451–460 (ERGEDDEHCK) has biased composition (basic and acidic residues).

Belongs to the protein-tyrosine phosphatase family. Non-receptor class dual specificity subfamily.

The enzyme catalyses O-phospho-L-tyrosyl-[protein] + H2O = L-tyrosyl-[protein] + phosphate. Its function is as follows. Dual specificity phosphatase that dephosphorylates MAP kinase FUS3 on both a Tyr and a Ser or Thr. Has a role in adaptation to pheromone. This Saccharomyces cerevisiae (strain ATCC 204508 / S288c) (Baker's yeast) protein is Tyrosine-protein phosphatase MSG5 (MSG5).